Consider the following 90-residue polypeptide: Small ribosomal subunit protein bS20 (90 aa).

Residues 1-11 are compositionally biased toward basic and acidic residues; it reads MANIKSSEKDI. Disordered regions lie at residues 1–29 and 69–90; these read MANIKSSEKDIRRTKRRNAANSQNRSRLR and SKNADRKKSRMAKRLNAVSAAA.

This sequence belongs to the bacterial ribosomal protein bS20 family.

Functionally, binds directly to 16S ribosomal RNA. The polypeptide is Small ribosomal subunit protein bS20 (Leptospira borgpetersenii serovar Hardjo-bovis (strain L550)).